A 154-amino-acid polypeptide reads, in one-letter code: Endoribonuclease YbeY (154 aa).

3 residues coordinate Zn(2+): His-114, His-118, and His-124.

This sequence belongs to the endoribonuclease YbeY family. Requires Zn(2+) as cofactor.

Its subcellular location is the cytoplasm. Single strand-specific metallo-endoribonuclease involved in late-stage 70S ribosome quality control and in maturation of the 3' terminus of the 16S rRNA. This is Endoribonuclease YbeY from Histophilus somni (strain 2336) (Haemophilus somnus).